A 161-amino-acid chain; its full sequence is N5-carboxyaminoimidazole ribonucleotide mutase (161 aa).

Substrate contacts are provided by S9, D12, and R39.

This sequence belongs to the AIR carboxylase family. Class I subfamily.

The catalysed reaction is 5-carboxyamino-1-(5-phospho-D-ribosyl)imidazole + H(+) = 5-amino-1-(5-phospho-D-ribosyl)imidazole-4-carboxylate. The protein operates within purine metabolism; IMP biosynthesis via de novo pathway; 5-amino-1-(5-phospho-D-ribosyl)imidazole-4-carboxylate from 5-amino-1-(5-phospho-D-ribosyl)imidazole (N5-CAIR route): step 2/2. Catalyzes the conversion of N5-carboxyaminoimidazole ribonucleotide (N5-CAIR) to 4-carboxy-5-aminoimidazole ribonucleotide (CAIR). This chain is N5-carboxyaminoimidazole ribonucleotide mutase, found in Vibrio cholerae serotype O1 (strain ATCC 39315 / El Tor Inaba N16961).